Reading from the N-terminus, the 314-residue chain is Chlorinase cctP2 (314 aa).

Over residues 1–14 the composition is skewed to basic and acidic residues; sequence MEGKTSRYQDEAHD. Residues 1–24 are disordered; it reads MEGKTSRYQDEAHDSAGSFNEETE. 2 short sequence motifs (HXXHC) span residues 150 to 154 and 177 to 181; these read HALHC and HIEHC.

Belongs to the ustYa family.

The protein operates within mycotoxin biosynthesis. Its function is as follows. Chlorinase; part of the gene cluster that mediates the biosynthesis of the mycotoxin cyclochlorotine, a hepatotoxic and carcinogenic cyclic chlorinated pentapeptide. Within the pathway, cctP2 catalyzes the formation of isocyclochlorotine via dichlorination of the Pro from the isocyclotine skeleton. The NRPS cctN initially catalyzes the condensation of L-serine (Ser), Pro, L-2-aminobutyrate (2Abu), Ser, and beta-Phe in this order to produce isocyclotine. After the dichlorination of Pro2 catalyzed by cctP2 to produce isocyclochlorotine, the cctO-mediated transacylation of isocyclochlorotine can furnish cyclochlorotine. The subsequent hydroxylation of cyclochlorotine by cctR yields hydroxycyclochlorotine as the final product. CctP1 probably acts as a phenylalanine aminomutase and provides the uncommon building block beta-Phe. Furthermore, 2Abu can be synthesized from threonine by one of the threonine dehydratases and transaminases localized outside of the cluster. The functions of the remaining proteins encoded by the cluster, cctM and cctT, have not been identified yet. The polypeptide is Chlorinase cctP2 (Talaromyces islandicus (Penicillium islandicum)).